Reading from the N-terminus, the 432-residue chain is Gamma-glutamyl phosphate reductase (432 aa).

This sequence belongs to the gamma-glutamyl phosphate reductase family.

It is found in the cytoplasm. The catalysed reaction is L-glutamate 5-semialdehyde + phosphate + NADP(+) = L-glutamyl 5-phosphate + NADPH + H(+). The protein operates within amino-acid biosynthesis; L-proline biosynthesis; L-glutamate 5-semialdehyde from L-glutamate: step 2/2. Its function is as follows. Catalyzes the NADPH-dependent reduction of L-glutamate 5-phosphate into L-glutamate 5-semialdehyde and phosphate. The product spontaneously undergoes cyclization to form 1-pyrroline-5-carboxylate. This chain is Gamma-glutamyl phosphate reductase, found in Methylobacterium radiotolerans (strain ATCC 27329 / DSM 1819 / JCM 2831 / NBRC 15690 / NCIMB 10815 / 0-1).